Reading from the N-terminus, the 760-residue chain is Xaa-Pro dipeptidyl-peptidase (760 aa).

Residues S349, D469, and H499 each act as charge relay system in the active site.

This sequence belongs to the peptidase S15 family. Homodimer.

Its subcellular location is the cytoplasm. It carries out the reaction Hydrolyzes Xaa-Pro-|- bonds to release unblocked, N-terminal dipeptides from substrates including Ala-Pro-|-p-nitroanilide and (sequentially) Tyr-Pro-|-Phe-Pro-|-Gly-Pro-|-Ile.. Its function is as follows. Removes N-terminal dipeptides sequentially from polypeptides having unsubstituted N-termini provided that the penultimate residue is proline. This Streptococcus pyogenes serotype M18 (strain MGAS8232) protein is Xaa-Pro dipeptidyl-peptidase.